The following is a 274-amino-acid chain: Formamidopyrimidine-DNA glycosylase (274 aa).

The active-site Schiff-base intermediate with DNA is Pro2. Glu3 functions as the Proton donor in the catalytic mechanism. The Proton donor; for beta-elimination activity role is filled by Lys60. DNA contacts are provided by His93 and Arg112. The FPG-type zinc finger occupies 240 to 274 (DVYGRKGETCRQCGTPITKTVVGGRGTHFCSVCQK). Catalysis depends on Arg264, which acts as the Proton donor; for delta-elimination activity.

The protein belongs to the FPG family. In terms of assembly, monomer. Zn(2+) is required as a cofactor.

The catalysed reaction is Hydrolysis of DNA containing ring-opened 7-methylguanine residues, releasing 2,6-diamino-4-hydroxy-5-(N-methyl)formamidopyrimidine.. The enzyme catalyses 2'-deoxyribonucleotide-(2'-deoxyribose 5'-phosphate)-2'-deoxyribonucleotide-DNA = a 3'-end 2'-deoxyribonucleotide-(2,3-dehydro-2,3-deoxyribose 5'-phosphate)-DNA + a 5'-end 5'-phospho-2'-deoxyribonucleoside-DNA + H(+). Involved in base excision repair of DNA damaged by oxidation or by mutagenic agents. Acts as a DNA glycosylase that recognizes and removes damaged bases. Has a preference for oxidized purines, such as 7,8-dihydro-8-oxoguanine (8-oxoG). Has AP (apurinic/apyrimidinic) lyase activity and introduces nicks in the DNA strand. Cleaves the DNA backbone by beta-delta elimination to generate a single-strand break at the site of the removed base with both 3'- and 5'-phosphates. This Halalkalibacterium halodurans (strain ATCC BAA-125 / DSM 18197 / FERM 7344 / JCM 9153 / C-125) (Bacillus halodurans) protein is Formamidopyrimidine-DNA glycosylase (mutM).